Here is a 115-residue protein sequence, read N- to C-terminus: Toxin-like structure LSTX-D1 (115 aa).

A signal peptide spans 1–22; the sequence is MKVLVLFSVLFLTLFSYSSTEA. Residues 23 to 44 constitute a propeptide that is removed on maturation; that stretch reads IDEFDSDAEEDMLSLMANEQVR. Cystine bridges form between Cys-48/Cys-63, Cys-55/Cys-72, Cys-62/Cys-87, and Cys-74/Cys-85.

The protein belongs to the neurotoxin 19 (CSTX) family. 01 subfamily. Expressed by the venom gland.

The protein localises to the secreted. In Lycosa singoriensis (Wolf spider), this protein is Toxin-like structure LSTX-D1.